Here is a 303-residue protein sequence, read N- to C-terminus: 1-acyl-sn-glycerol-3-phosphate acyltransferase (303 aa).

Positions 82 to 87 match the HXXXXD motif motif; sequence HQSTLD. Positions 278–303 are disordered; that stretch reads NEPVPSVSISNDVNTHNEGSSVKKMH. Over residues 284 to 297 the composition is skewed to polar residues; sequence VSISNDVNTHNEGS.

Belongs to the 1-acyl-sn-glycerol-3-phosphate acyltransferase family.

The protein localises to the lipid droplet. The enzyme catalyses a 1-acyl-sn-glycero-3-phosphate + an acyl-CoA = a 1,2-diacyl-sn-glycero-3-phosphate + CoA. It carries out the reaction a 1-acyl-sn-glycero-3-phosphocholine + an acyl-CoA = a 1,2-diacyl-sn-glycero-3-phosphocholine + CoA. The catalysed reaction is a 1-acyl-sn-glycero-3-phosphoethanolamine + an acyl-CoA = a 1,2-diacyl-sn-glycero-3-phosphoethanolamine + CoA. It catalyses the reaction 1-hexadecanoyl-sn-glycero-3-phosphate + (9Z)-octadecenoyl-CoA = 1-hexadecanoyl-2-(9Z-octadecenoyl)-sn-glycero-3-phosphate + CoA. The enzyme catalyses 1-octadecanoyl-sn-glycero-3-phosphate + (9Z)-octadecenoyl-CoA = 1-octadecanoyl-2-(9Z-octadecenoyl)-sn-glycero-3-phosphate + CoA. It carries out the reaction 1-(9Z-octadecenoyl)-sn-glycero-3-phospho-L-serine + (9Z)-octadecenoyl-CoA = 1,2-di-(9Z)-octadecenoyl-sn-glycero-3-phospho-L-serine + CoA. The catalysed reaction is a 1-acyl-sn-glycero-3-phospho-(1D-myo-inositol) + (9Z)-octadecenoyl-CoA = a 1-acyl-2-(9Z-octadecenoyl)-sn-glycero-3-phospho-(1D-myo-inositol) + CoA. It catalyses the reaction 1-heptadecanoyl-sn-glycero-3-phosphate + (9Z)-octadecenoyl-CoA = 1-heptadecanoyl-2-(9Z)-octadecenoyl-sn-glycero-3-phosphate + CoA. The enzyme catalyses 1-heptadecanoyl-sn-glycero-3-phosphate + dodecanoyl-CoA = 1-heptadecanoyl-2-dodecanoyl-sn-glycero-3-phosphate + CoA. It carries out the reaction 1-heptadecanoyl-sn-glycero-3-phosphate + tetradecanoyl-CoA = 1-heptadecanoyl-2-tetradecanoyl-sn-glycero-3-phosphate + CoA. It functions in the pathway phospholipid metabolism; CDP-diacylglycerol biosynthesis; CDP-diacylglycerol from sn-glycerol 3-phosphate: step 2/3. Acyltransferase that catalyzes the sn-2-specific, acyl-CoA-dependent acylation of lysophosphatidic acid (LPA) to phosphatidic acid (PA) in lipid particles. Together with ALE1, plays a central role in PA biosynthesis. PA is the intermediate, from which all glycerophospholipids are synthesized. Can also acylate lysophosphoinositol (LPI) and lysophosphoserine (LPS). The fatty acyl substrates include 18:1-acyl-CoA, 14:0-acyl-CoA, 12:0-acyl-CoA and 10:0-acyl-CoA. The polypeptide is 1-acyl-sn-glycerol-3-phosphate acyltransferase (Saccharomyces cerevisiae (strain ATCC 204508 / S288c) (Baker's yeast)).